The sequence spans 736 residues: Gephyrin (736 aa).

An MPT Mo-transferase region spans residues 14–166; that stretch reads QIRVGVLTVS…FILPALPHAI (153 aa). The interaction with GABARAP stretch occupies residues 140 to 316; it reads LIINLPGSKK…VDITKVARRH (177 aa). Disordered stretches follow at residues 181–232 and 260–290; these read DELE…DSSS and TASL…PKVQ. Residues 187–199 are compositionally biased toward pro residues; sequence PSPPPPLSPPPTT. Residues Ser-188 and Ser-194 each carry the phosphoserine modification. Residue Thr-198 is modified to Phosphothreonine. Ser-200 is subject to Phosphoserine. Cys-212 carries the S-palmitoyl cysteine lipid modification. The span at 261 to 290 shows a compositional bias: polar residues; the sequence is ASLSTTPSESPRAQATSRLSTASCPTPKVQ. Ser-262 carries the post-translational modification Phosphoserine. Phosphothreonine is present on residues Thr-265 and Thr-266. 2 positions are modified to phosphoserine: Ser-268 and Ser-270. The S-palmitoyl cysteine moiety is linked to residue Cys-284. The residue at position 305 (Ser-305) is a Phosphoserine. An MPT adenylyltransferase region spans residues 326–736; that stretch reads MDKAFITVLE…VVDVMVIGRL (411 aa).

The protein in the N-terminal section; belongs to the MoaB/Mog family. In the C-terminal section; belongs to the MoeA family. As to quaternary structure, homotrimer, homodimer and homooligomer. Interacts with GABARAP. Interacts with SRGAP2 (via SH3 domain). Interacts with GABRA3. Interacts with GLRB. GABRA3 and GLRB occupy overlapping binding sites. Interacts with ARHGAP32; IQSEC3, INSYN1 and INSYN2A. It depends on Mg(2+) as a cofactor. In terms of processing, palmitoylated. Palmitoylation is stimulated by GABA type A receptors activity. Palmitoylation by ZDHHC12 regulates clustering at synapses.

The protein localises to the postsynaptic cell membrane. The protein resides in the cell membrane. It is found in the cytoplasm. Its subcellular location is the cytosol. It localises to the cytoskeleton. The protein localises to the cell projection. The protein resides in the dendrite. It is found in the postsynaptic density. The enzyme catalyses molybdopterin + ATP + H(+) = adenylyl-molybdopterin + diphosphate. The catalysed reaction is adenylyl-molybdopterin + molybdate = Mo-molybdopterin + AMP + H(+). Its pathway is cofactor biosynthesis; molybdopterin biosynthesis. Inhibited by copper and tungsten. In terms of biological role, microtubule-associated protein involved in membrane protein-cytoskeleton interactions. It is thought to anchor the inhibitory glycine receptor (GLYR) to subsynaptic microtubules. Acts as a major instructive molecule at inhibitory synapses, where it also clusters GABA type A receptors. Its function is as follows. Also has a catalytic activity and catalyzes two steps in the biosynthesis of the molybdenum cofactor. In the first step, molybdopterin is adenylated. Subsequently, molybdate is inserted into adenylated molybdopterin and AMP is released. This Homo sapiens (Human) protein is Gephyrin.